The sequence spans 235 residues: 2-C-methyl-D-erythritol 4-phosphate cytidylyltransferase (235 aa).

This sequence belongs to the IspD/TarI cytidylyltransferase family. IspD subfamily.

The catalysed reaction is 2-C-methyl-D-erythritol 4-phosphate + CTP + H(+) = 4-CDP-2-C-methyl-D-erythritol + diphosphate. The protein operates within isoprenoid biosynthesis; isopentenyl diphosphate biosynthesis via DXP pathway; isopentenyl diphosphate from 1-deoxy-D-xylulose 5-phosphate: step 2/6. Its function is as follows. Catalyzes the formation of 4-diphosphocytidyl-2-C-methyl-D-erythritol from CTP and 2-C-methyl-D-erythritol 4-phosphate (MEP). This is 2-C-methyl-D-erythritol 4-phosphate cytidylyltransferase from Pseudomonas fluorescens (strain ATCC BAA-477 / NRRL B-23932 / Pf-5).